We begin with the raw amino-acid sequence, 84 residues long: Succinate dehydrogenase membrane anchor subunit (84 aa).

Topologically, residues 1–3 (MIT) are mitochondrial matrix. The helical transmembrane segment at 4–24 (FQWLIVRVVALFISLTILIDI) threads the bilayer. The Mitochondrial intermembrane portion of the chain corresponds to 25–31 (EMFVVML). The chain crosses the membrane as a helical span at residues 32 to 52 (SFLIIHISIGLKAIIHDYIHF). A heme-binding site is contributed by His-37. A ubiquinone is bound at residue Tyr-49. Residues 53–58 (QKIKLM) are Mitochondrial matrix-facing. The helical transmembrane segment at 59 to 81 (LLILLRVSAIEISRSFRTFYIII) threads the bilayer. Topologically, residues 82-84 (KNT) are mitochondrial intermembrane.

In terms of assembly, part of an enzyme complex containing four subunits: a flavoprotein, an iron-sulfur protein, plus two membrane-anchoring proteins. Heme is required as a cofactor.

Its subcellular location is the mitochondrion inner membrane. It functions in the pathway carbohydrate metabolism; tricarboxylic acid cycle. Membrane-anchoring subunit of succinate dehydrogenase (SDH). This Chondrus crispus (Carrageen Irish moss) protein is Succinate dehydrogenase membrane anchor subunit (SDH4).